The sequence spans 118 residues: MMEALLVATGGFFGAITRFAISNWFKKRTKTSFPIATFLINITGAFLLGYIIGNGVTTGWQLLLGTGFMGAFTTFSTFKLESIQLFNRKNLSILFLYLSATYIIGILFAFLGMQLGGI.

4 helical membrane-spanning segments follow: residues 1–21 (MMEA…RFAI), 33–53 (FPIA…YIIG), 55–75 (GVTT…FTTF), and 93–113 (ILFL…FLGM). Positions 70 and 73 each coordinate Na(+).

The protein belongs to the fluoride channel Fluc/FEX (TC 1.A.43) family.

The protein localises to the cell membrane. The catalysed reaction is fluoride(in) = fluoride(out). Its activity is regulated as follows. Na(+) is not transported, but it plays an essential structural role and its presence is essential for fluoride channel function. Functionally, fluoride-specific ion channel. Important for reducing fluoride concentration in the cell, thus reducing its toxicity. In Bacillus cereus (strain ATCC 10987 / NRS 248), this protein is Fluoride-specific ion channel FluC 2.